A 300-amino-acid chain; its full sequence is NAD kinase (300 aa).

Asp77 (proton acceptor) is an active-site residue. NAD(+) is bound by residues 77 to 78 (DG), 151 to 152 (ND), His162, Arg179, Asp181, and 192 to 197 (TAYSLS).

Belongs to the NAD kinase family. A divalent metal cation is required as a cofactor.

Its subcellular location is the cytoplasm. The catalysed reaction is NAD(+) + ATP = ADP + NADP(+) + H(+). In terms of biological role, involved in the regulation of the intracellular balance of NAD and NADP, and is a key enzyme in the biosynthesis of NADP. Catalyzes specifically the phosphorylation on 2'-hydroxyl of the adenosine moiety of NAD to yield NADP. This Cellvibrio japonicus (strain Ueda107) (Pseudomonas fluorescens subsp. cellulosa) protein is NAD kinase.